Consider the following 220-residue polypeptide: Protein-L-isoaspartate O-methyltransferase (220 aa).

Residue S68 is part of the active site.

Belongs to the methyltransferase superfamily. L-isoaspartyl/D-aspartyl protein methyltransferase family.

Its subcellular location is the cytoplasm. The catalysed reaction is [protein]-L-isoaspartate + S-adenosyl-L-methionine = [protein]-L-isoaspartate alpha-methyl ester + S-adenosyl-L-homocysteine. In terms of biological role, catalyzes the methyl esterification of L-isoaspartyl residues in peptides and proteins that result from spontaneous decomposition of normal L-aspartyl and L-asparaginyl residues. It plays a role in the repair and/or degradation of damaged proteins. This chain is Protein-L-isoaspartate O-methyltransferase, found in Dictyoglomus thermophilum (strain ATCC 35947 / DSM 3960 / H-6-12).